The following is a 1658-amino-acid chain: Collagen alpha-1(XXVII) chain B (1658 aa).

Positions 1 to 38 (MEPDNTPSSRLRAAGVGGRAVFFCMVLYCTCCLRLAQA) are cleaved as a signal peptide. In terms of domain architecture, Laminin G-like spans 66-229 (GVILTTRARI…NYCKYIKKQC (164 aa)). A compositionally biased stretch (polar residues) spans 308–323 (SIRNRTSQISPKPTQQ). Disordered regions lie at residues 308–332 (SIRNRTSQISPKPTQQNRKKAKKER), 345–364 (VTDSPTSQQQNQVDIPTTTT), 427–550 (GLKG…GNMG), 571–614 (GERG…APGP), 637–1332 (GPKG…DAGE), and 1377–1415 (IIGPSGNPGPQGDKGNKGEMGVQGPRGPPGPRGPPGPPG). The segment at 424-1417 (ELTGLKGEPG…RGPPGPPGLP (994 aa)) is triple-helical region. 7 Collagen-like domains span residues 425 to 478 (LTGL…GNPG), 493 to 552 (GLVG…MGPK), 556 to 615 (GFIG…PGPV), 622 to 681 (GDMG…PGLP), 685 to 744 (GKPG…PGLE), 748 to 807 (GPVG…MGLA), and 811 to 870 (GDRG…RGPD). Residues 434 to 444 (LPGPPGPPGQP) are compositionally biased toward pro residues. Low complexity predominate over residues 491–506 (DPGLVGLPGQPGQPGR). Composition is skewed to low complexity over residues 657–666 (LGLPGEPGEP) and 678–692 (PGLPGVQGKPGPQGK). The segment covering 733 to 742 (GIPGPGGLPG) has biased composition (gly residues). Composition is skewed to low complexity over residues 837–852 (RGLSGPAGAPGPHGSR) and 875–890 (EKGMMGMKGPEGPPGK). 8 consecutive Collagen-like domains span residues 892–951 (GLSG…IGLP), 952–1011 (GKAG…VGLE), 1024–1083 (GTEG…IGPK), 1084–1137 (GSRG…DGKV), 1139–1198 (GPPG…KGSK), 1199–1258 (GNKG…PGDL), 1268–1327 (GKPG…KGQP), and 1361–1420 (GPQG…PAVA). Residues 1040–1058 (PEGKPGKIGERGKPGEKGS) show a composition bias toward basic and acidic residues. Residues 1112–1124 (HQGPQGSLGSPGP) are compositionally biased toward low complexity. A compositionally biased stretch (basic and acidic residues) spans 1125–1137 (KGEKGEQGDDGKV). Positions 1215–1230 (NRGSPGPVGVPGPRGV) are enriched in low complexity. Over residues 1307–1316 (GLNGGMGFPG) the composition is skewed to gly residues. Residues 1402–1415 (RGPPGPRGPPGPPG) are compositionally biased toward pro residues. The propeptide at 1421–1658 (FSHENEALGA…HLEVGPVCFL (238 aa)) is C-terminal propeptide. Residues 1458–1658 (SEIFKTLHYL…HLEVGPVCFL (201 aa)) form the Fibrillar collagen NC1 domain. Cystine bridges form between Cys1488–Cys1520, Cys1529–Cys1656, and Cys1565–Cys1609. Residues Asp1506, Asn1508, Cys1511, and Asp1514 each coordinate Ca(2+). Residue Asn1567 is glycosylated (N-linked (GlcNAc...) asparagine).

Belongs to the fibrillar collagen family. Weakly expressed in the notochord from the 6 somite stage. Expressed throughout the notochord at 13 somites, then becomes restricted to the distal tip of the notochord by 24 hpf. Also expressed in head cartilages by 48 hpf.

It localises to the secreted. The protein localises to the extracellular space. Its subcellular location is the extracellular matrix. Functionally, may play a role during the calcification of cartilage and the transition of cartilage to bone. Together with col27a1a, plays a role in development of the notochord and axial skeleton. In Danio rerio (Zebrafish), this protein is Collagen alpha-1(XXVII) chain B (col27a1b).